Consider the following 800-residue polypeptide: Protein MICRORCHIDIA 4 (800 aa).

Disordered regions lie at residues 1–76 and 552–702; these read MEPI…ARSD and AKRQ…RTLS. Polar residues predominate over residues 9 to 18; sequence NPVTTSTLST. The segment covering 36–47 has biased composition (low complexity); sequence ELSSSNEGSELG. 2 stretches are compositionally biased toward basic and acidic residues: residues 559–578 and 628–641; these read SAKD…EFDP and VSKD…EKGG. Residues 666–675 are compositionally biased toward acidic residues; sequence NSDDDYDCDS. Residues 699–766 adopt a coiled-coil conformation; the sequence is RTLSQLEQEN…QASLIDVFAE (68 aa). 2 short sequence motifs (nuclear localization signal) span residues 716–723 and 735–742; these read DKKEEVFL and LRKTLEAE.

This sequence belongs to the MORC ATPase protein family. Homodimer and heterodimer. Component of an RNA-directed DNA methylation (RdDM) complex. Forms homomeric complexes. The cofactor is Mg(2+). Requires Mn(2+) as cofactor.

Its subcellular location is the nucleus. In terms of biological role, exhibits ATPase activity. Binds DNA/RNA in a non-specific manner and exhibits endonuclease activity. Probably involved in DNA repair. Involved in RNA-directed DNA methylation (RdDM) as a component of the RdDM machinery and required for gene silencing. May also be involved in the regulation of chromatin architecture to maintain gene silencing. Together with MORC7, acts to suppress a wide set of non-methylated protein-coding genes, especially involved in pathogen response. Positive regulator of defense against the oomycete Hyaloperonospora arabidopsidis (Hpa). The chain is Protein MICRORCHIDIA 4 from Arabidopsis thaliana (Mouse-ear cress).